The chain runs to 504 residues: Aspartyl/glutamyl-tRNA(Asn/Gln) amidotransferase subunit B (504 aa).

It belongs to the GatB/GatE family. GatB subfamily. Heterotrimer of A, B and C subunits.

It catalyses the reaction L-glutamyl-tRNA(Gln) + L-glutamine + ATP + H2O = L-glutaminyl-tRNA(Gln) + L-glutamate + ADP + phosphate + H(+). The catalysed reaction is L-aspartyl-tRNA(Asn) + L-glutamine + ATP + H2O = L-asparaginyl-tRNA(Asn) + L-glutamate + ADP + phosphate + 2 H(+). Its function is as follows. Allows the formation of correctly charged Asn-tRNA(Asn) or Gln-tRNA(Gln) through the transamidation of misacylated Asp-tRNA(Asn) or Glu-tRNA(Gln) in organisms which lack either or both of asparaginyl-tRNA or glutaminyl-tRNA synthetases. The reaction takes place in the presence of glutamine and ATP through an activated phospho-Asp-tRNA(Asn) or phospho-Glu-tRNA(Gln). This is Aspartyl/glutamyl-tRNA(Asn/Gln) amidotransferase subunit B from Tropheryma whipplei (strain Twist) (Whipple's bacillus).